Consider the following 216-residue polypeptide: Germin-like protein 1-1 (216 aa).

The first 24 residues, 1–24 (MARVQLWVAAACAVVLALAAPSLA), serve as a signal peptide directing secretion. The cysteines at positions 34 and 49 are disulfide-linked. Residues Asn52 and Asn76 are each glycosylated (N-linked (GlcNAc...) asparagine). One can recognise a Cupin type-1 domain in the interval 61-209 (AGLKNPGNTN…AFRVDVPQVD (149 aa)). Mn(2+) is bound by residues His109, His111, Glu116, and His155.

The protein belongs to the germin family. In terms of assembly, oligomer (believed to be a pentamer but probably hexamer).

The protein localises to the secreted. Its subcellular location is the extracellular space. It localises to the apoplast. In terms of biological role, may play a role in plant defense. Probably has no oxalate oxidase activity even if the active site is conserved. This Oryza sativa subsp. japonica (Rice) protein is Germin-like protein 1-1 (GER4).